The following is a 467-amino-acid chain: MIDIVLNTIHKYNMINKGDKIIVGVSGGPDSMCLLHILYRLRDEYNLNIIAAHINHCLRGKDADNDEKYVENFCKKYDIDFYSTKIDVGKLAKKENISFEVAGRECRYDFFNKLKLKFNCDKIALAHNSNDQCETILMRIMRGTGIEGLAGIKAIRDNIYIRPIIEASRKQIEDYCEEHELEARIDKTNLESIYARNKVRLELIPYIQENFNQDIIAVINRMGNNIDVDREYLDFASDKKFYQFCTSTKYEVVIKKEAFLEHKAITSRIIRRSINRLKGNLYNFERVHVEDILNLQKGSTGKFITLPEKIKALNNYGDIHIFFEEFSDNKGENKEKEQILEIGNNIINSNIKVQIELTNEIHKDIMGKDVYVKYFDFDKINGNIMFRYRKDGDRFTSLGMKGSKKIKDLFIDFKIPKHLRDYVPLICFGNEIAWIVGYRISEKFKVEKNTKNILKIKIEGEKENELV.

Residue Ser26–Ser31 coordinates ATP.

It belongs to the tRNA(Ile)-lysidine synthase family.

It is found in the cytoplasm. It carries out the reaction cytidine(34) in tRNA(Ile2) + L-lysine + ATP = lysidine(34) in tRNA(Ile2) + AMP + diphosphate + H(+). Ligates lysine onto the cytidine present at position 34 of the AUA codon-specific tRNA(Ile) that contains the anticodon CAU, in an ATP-dependent manner. Cytidine is converted to lysidine, thus changing the amino acid specificity of the tRNA from methionine to isoleucine. This is tRNA(Ile)-lysidine synthase from Clostridium tetani (strain Massachusetts / E88).